The chain runs to 551 residues: Glucose-6-phosphate isomerase 2 (551 aa).

Catalysis depends on E359, which acts as the Proton donor. Catalysis depends on residues H390 and K514.

It belongs to the GPI family.

The protein resides in the cytoplasm. It carries out the reaction alpha-D-glucose 6-phosphate = beta-D-fructose 6-phosphate. Its pathway is carbohydrate biosynthesis; gluconeogenesis. It functions in the pathway carbohydrate degradation; glycolysis; D-glyceraldehyde 3-phosphate and glycerone phosphate from D-glucose: step 2/4. In terms of biological role, catalyzes the reversible isomerization of glucose-6-phosphate to fructose-6-phosphate. In Streptomyces coelicolor (strain ATCC BAA-471 / A3(2) / M145), this protein is Glucose-6-phosphate isomerase 2.